Consider the following 239-residue polypeptide: Phosphoribosylaminoimidazole-succinocarboxamide synthase (239 aa).

The protein belongs to the SAICAR synthetase family.

The catalysed reaction is 5-amino-1-(5-phospho-D-ribosyl)imidazole-4-carboxylate + L-aspartate + ATP = (2S)-2-[5-amino-1-(5-phospho-beta-D-ribosyl)imidazole-4-carboxamido]succinate + ADP + phosphate + 2 H(+). It functions in the pathway purine metabolism; IMP biosynthesis via de novo pathway; 5-amino-1-(5-phospho-D-ribosyl)imidazole-4-carboxamide from 5-amino-1-(5-phospho-D-ribosyl)imidazole-4-carboxylate: step 1/2. The protein is Phosphoribosylaminoimidazole-succinocarboxamide synthase of Bacillus cereus (strain AH187).